Consider the following 379-residue polypeptide: Flagellin A (379 aa).

2 coiled-coil regions span residues 104-129 (NSAS…IAET) and 314-341 (QNRL…IKDT).

It belongs to the bacterial flagellin family. In terms of assembly, heteromer of multiple flagellin subunits including FlaA, FlaB, FlaC, FlaD and FlaE.

It localises to the secreted. Its subcellular location is the bacterial flagellum. Functionally, flagellin is the subunit protein which polymerizes to form the filaments of bacterial flagella. FlaA is required to form a core or scaffold into which the other flagellins are inserted to provide structural integrity. Essential for flagellar synthesis and motility; important for full virulence. The chain is Flagellin A (flaA) from Vibrio cholerae serotype O1 (strain ATCC 39541 / Classical Ogawa 395 / O395).